Consider the following 670-residue polypeptide: MEVPAKIQKRIERLRHEINDHNYRYYVLSQPTIPDSVYDELFHELEKLEKKYPETITPSSPTQRVGAEPLKVFEPVHHEIPMLSLDNVFDEKGLRAFDKRIRQRLKLDKPFEYVCEPKMDGVALSLLYENGELIRAATRGDGYTGENVTQNTRTIASVPLQLRGNDYPELVEIRGEVLMPREGFAKFNREAEKRGDKTFANPRNAASGSLRQLDPRITAKRPLIFYGYLIGLLKGKDFPKNHCDVLKWFKDWGIPVISEIKVVGGIEGCLDYYEHLVKTREKMPFDIDGIVIKVNSLQVQAELGFVSRAPRWAIAYKFPAQEKMTVVKAIEFQVGRTGAVTPVARLEPVSVSGVTVSNATLHNFDELYRKDVRVGDTVIVRRAGDVIPEVVGPILAKRPKKAKLIKIPSRCPVCHAEVIKPEGEAVARCVGGLYCRAQLRESIKHFSSRRALDIEGLGDKLVELFIQEKLIKDITGIYQLKKSAITALPRMGEKSAENLLTAIEKSKKTTLPRFLYALGIRGVGDTTARTLARHFHELDLLMKASIETLQEIRDIGPVAAENIHAFFHQKNNAELINKLIHLGVHWPQEKAVVKSEIAGKTFVLTGALKSLTREEAEEKIERSGGKATSSVSKNTDYVIVGENPGSKYEKAKALGISLIDEEAFLKLLKS.

Residues 35-39 (DSVYD), 84-85 (SL), and Glu116 each bind NAD(+). Lys118 serves as the catalytic N6-AMP-lysine intermediate. The NAD(+) site is built by Arg139, Glu176, Lys293, and Lys317. 4 residues coordinate Zn(2+): Cys411, Cys414, Cys429, and Cys435. Residues 592 to 670 (VVKSEIAGKT…EEAFLKLLKS (79 aa)) form the BRCT domain.

Belongs to the NAD-dependent DNA ligase family. LigA subfamily. The cofactor is Mg(2+). Mn(2+) is required as a cofactor.

It carries out the reaction NAD(+) + (deoxyribonucleotide)n-3'-hydroxyl + 5'-phospho-(deoxyribonucleotide)m = (deoxyribonucleotide)n+m + AMP + beta-nicotinamide D-nucleotide.. In terms of biological role, DNA ligase that catalyzes the formation of phosphodiester linkages between 5'-phosphoryl and 3'-hydroxyl groups in double-stranded DNA using NAD as a coenzyme and as the energy source for the reaction. It is essential for DNA replication and repair of damaged DNA. The chain is DNA ligase from Coxiella burnetii (strain RSA 331 / Henzerling II).